The chain runs to 270 residues: Sugar phosphatase YidA (270 aa).

Residue aspartate 9 is the Nucleophile of the active site. Aspartate 9 contacts Mg(2+). Position 10 (methionine 10) interacts with phosphate. Aspartate 11 is a binding site for Mg(2+). Phosphate contacts are provided by residues 43-44 (TG) and lysine 197. Aspartate 220 provides a ligand contact to Mg(2+). Residue asparagine 223 coordinates phosphate.

It belongs to the HAD-like hydrolase superfamily. Cof family. Homodimer. It depends on Mg(2+) as a cofactor.

It carries out the reaction sugar phosphate + H2O = sugar + phosphate.. Functionally, catalyzes the dephosphorylation of different sugar phosphates. This Escherichia coli O6:H1 (strain CFT073 / ATCC 700928 / UPEC) protein is Sugar phosphatase YidA (yidA).